Reading from the N-terminus, the 309-residue chain is uncharacterized protein (309 aa).

This is an uncharacterized protein from Aedes vexans (Inland floodwater mosquito).